The primary structure comprises 105 residues: L-rhamnose mutarotase (105 aa).

Tyrosine 19 serves as a coordination point for substrate. Histidine 23 functions as the Proton donor in the catalytic mechanism. Substrate-binding positions include tyrosine 42 and tryptophan 77–tryptophan 78.

It belongs to the rhamnose mutarotase family. In terms of assembly, homodimer.

The protein localises to the cytoplasm. The catalysed reaction is alpha-L-rhamnose = beta-L-rhamnose. It functions in the pathway carbohydrate metabolism; L-rhamnose metabolism. Functionally, involved in the anomeric conversion of L-rhamnose. This chain is L-rhamnose mutarotase, found in Mesorhizobium japonicum (strain LMG 29417 / CECT 9101 / MAFF 303099) (Mesorhizobium loti (strain MAFF 303099)).